We begin with the raw amino-acid sequence, 479 residues long: Long-chain alcohol oxidase (479 aa).

The 170-residue stretch at 14–183 (QILRPSAAYT…LAVRIRCREQ (170 aa)) folds into the FAD-binding PCMH-type domain. Position 49 is a pros-8alpha-FAD histidine (His-49). FAD contacts are provided by residues Thr-113, Gly-116, 120–123 (TGTH), and Ile-173. The chain crosses the membrane as a helical span at residues 241–258 (LYWLGTMDYGLILQILFL). Arg-369 and His-425 together coordinate FAD.

Belongs to the oxygen-dependent FAD-linked oxidoreductase family. It depends on FAD as a cofactor.

It localises to the cell membrane. The enzyme catalyses a long-chain primary fatty alcohol + O2 = a long-chain fatty aldehyde + H2O2. It carries out the reaction dodecan-1-ol + O2 = dodecanal + H2O2. It catalyses the reaction tetradecan-1-ol + O2 = tetradecanal + H2O2. The catalysed reaction is octan-1-ol + O2 = octanal + H2O2. The enzyme catalyses decan-1-ol + O2 = decanal + H2O2. The protein operates within lipid metabolism; fatty acid metabolism. In vitro catalyzes the oxidation of a range of fatty alcohols having a carbon chain length of six and above, with a reduction of O2 to H2O2. Shows the highest activity with 1-dodecanol. Is likely involved in lipid metabolism. This chain is Long-chain alcohol oxidase, found in Uncultured marine euryarchaeote.